The primary structure comprises 264 residues: Proteasome assembly chaperone 2 (264 aa).

Thr-137 is modified (phosphothreonine).

The protein belongs to the PSMG2 family. In terms of assembly, forms a heterodimer with PSMG1. The PSMG1-PSMG2 heterodimer interacts directly with the PSMA5 and PSMA7 proteasome alpha subunits. Post-translationally, degraded by the proteasome upon completion of 20S proteasome maturation.

The protein resides in the nucleus. Its function is as follows. Chaperone protein which promotes assembly of the 20S proteasome as part of a heterodimer with PSMG1. The PSMG1-PSMG2 heterodimer binds to the PSMA5 and PSMA7 proteasome subunits, promotes assembly of the proteasome alpha subunits into the heteroheptameric alpha ring and prevents alpha ring dimerization. The sequence is that of Proteasome assembly chaperone 2 from Mus musculus (Mouse).